The sequence spans 64 residues: Sec-independent protein translocase protein TatA (64 aa).

The chain crosses the membrane as a helical span at residues 10-30 (LVLILGIALIIFGPGKLPELG).

It belongs to the TatA/E family. Forms a complex with TatC.

The protein localises to the cell membrane. Its function is as follows. Part of the twin-arginine translocation (Tat) system that transports large folded proteins containing a characteristic twin-arginine motif in their signal peptide across membranes. TatA could form the protein-conducting channel of the Tat system. The protein is Sec-independent protein translocase protein TatA of Alkaliphilus oremlandii (strain OhILAs) (Clostridium oremlandii (strain OhILAs)).